Reading from the N-terminus, the 433-residue chain is Phosphoribosylamine--glycine ligase (433 aa).

The 207-residue stretch at 111–317 (EFMARNNIKG…FVDICEAIVD (207 aa)) folds into the ATP-grasp domain. 138 to 194 (EDNPDVVVKPAGLTGGKGVKVMGEHMHTLEEAREYVKSVLEHDRVVIEERLKGEEVT) lines the ATP pocket. Mg(2+) contacts are provided by glutamine 275, glutamate 287, and asparagine 289. Mn(2+) is bound by residues glutamine 275, glutamate 287, and asparagine 289.

Belongs to the GARS family. The cofactor is Mg(2+). Mn(2+) serves as cofactor.

It catalyses the reaction 5-phospho-beta-D-ribosylamine + glycine + ATP = N(1)-(5-phospho-beta-D-ribosyl)glycinamide + ADP + phosphate + H(+). It participates in purine metabolism; IMP biosynthesis via de novo pathway; N(1)-(5-phospho-D-ribosyl)glycinamide from 5-phospho-alpha-D-ribose 1-diphosphate: step 2/2. The sequence is that of Phosphoribosylamine--glycine ligase from Methanocella arvoryzae (strain DSM 22066 / NBRC 105507 / MRE50).